We begin with the raw amino-acid sequence, 222 residues long: Kunitz trypsin inhibitor 3 (222 aa).

An N-terminal signal peptide occupies residues methionine 1–alanine 23. Residue asparagine 65 is glycosylated (N-linked (GlcNAc...) asparagine). 2 disulfide bridges follow: cysteine 72–cysteine 119 and cysteine 165–cysteine 173. Asparagine 175 carries an N-linked (GlcNAc...) asparagine glycan.

It belongs to the protease inhibitor I3 (leguminous Kunitz-type inhibitor) family.

Functionally, exhibits Kunitz trypsin protease inhibitor activity. The sequence is that of Kunitz trypsin inhibitor 3 from Arabidopsis thaliana (Mouse-ear cress).